A 190-amino-acid chain; its full sequence is Putative manganese efflux pump MntP (190 aa).

A run of 6 helical transmembrane segments spans residues 3-23 (PASI…AAVG), 39-59 (IGLI…FIGQ), 65-85 (VANW…LHMI), 106-128 (WLLA…GLAF), 133-155 (IWVA…VMLG), and 157-177 (AIGT…LIIV).

It belongs to the MntP (TC 9.B.29) family.

Its subcellular location is the cell inner membrane. Its function is as follows. Probably functions as a manganese efflux pump. The polypeptide is Putative manganese efflux pump MntP (Pseudomonas fluorescens (strain ATCC BAA-477 / NRRL B-23932 / Pf-5)).